A 172-amino-acid polypeptide reads, in one-letter code: MKAVFLTLLFGLVCTAQETPAEIDPSKIPGEWRIIYAAADNKDKIVEGGPLRNYYRRIECINDCESLSITFYLKDQGTCLLLTEVAKRQEGYVYVLEFYGTNTLEVIHVSENMLVTYVENYDGERITKMTEGLAKGTSFTPEELEKYQQLNSERGVPNENIENLIKTDNCPP.

Residues 1–16 (MKAVFLTLLFGLVCTA) form the signal peptide. Q17 bears the Pyrrolidone carboxylic acid mark. Intrachain disulfides connect C60–C64 and C79–C170.

The protein belongs to the calycin superfamily. Lipocalin family. Found exclusively in skin. Produced in sweat glands and transported to the skin surface.

It localises to the secreted. In terms of biological role, probable pheromone carrier. This is Allergen Bos d 2 from Bos taurus (Bovine).